Reading from the N-terminus, the 141-residue chain is MSEIRLGLVVTEFNREITYAMEELAVQHAKDLGAKVVERVLVPGSFEVPLAVRKLLERDDIDAVVTLGAIIKGDTDHDQAIAQQAFRKIQDLMVEYGKPVALGISGPGMTRMEALERVHYAKRAVEAAVKMVRRLRELEGE.

5-amino-6-(D-ribitylamino)uracil is bound by residues Phe-13, 45–47 (SFE), and 69–71 (AII). A (2S)-2-hydroxy-3-oxobutyl phosphate-binding site is contributed by 74–75 (DT). His-77 (proton donor) is an active-site residue. Leu-102 contacts 5-amino-6-(D-ribitylamino)uracil. Residue Arg-117 coordinates (2S)-2-hydroxy-3-oxobutyl phosphate.

It belongs to the DMRL synthase family.

The catalysed reaction is (2S)-2-hydroxy-3-oxobutyl phosphate + 5-amino-6-(D-ribitylamino)uracil = 6,7-dimethyl-8-(1-D-ribityl)lumazine + phosphate + 2 H2O + H(+). It functions in the pathway cofactor biosynthesis; riboflavin biosynthesis; riboflavin from 2-hydroxy-3-oxobutyl phosphate and 5-amino-6-(D-ribitylamino)uracil: step 1/2. Catalyzes the formation of 6,7-dimethyl-8-ribityllumazine by condensation of 5-amino-6-(D-ribitylamino)uracil with 3,4-dihydroxy-2-butanone 4-phosphate. This is the penultimate step in the biosynthesis of riboflavin. The protein is 6,7-dimethyl-8-ribityllumazine synthase of Methanopyrus kandleri (strain AV19 / DSM 6324 / JCM 9639 / NBRC 100938).